The chain runs to 372 residues: Tyrosine--tRNA ligase 1 (372 aa).

The L-tyrosine site is built by Tyr37, Tyr169, Gln173, Asp176, and Gln191. Positions 246–250 (KMSKS) match the 'KMSKS' region motif. Lys249 is a binding site for ATP.

Belongs to the class-I aminoacyl-tRNA synthetase family. TyrS type 4 subfamily. Homodimer.

The protein localises to the cytoplasm. It carries out the reaction tRNA(Tyr) + L-tyrosine + ATP = L-tyrosyl-tRNA(Tyr) + AMP + diphosphate + H(+). Functionally, catalyzes the attachment of tyrosine to tRNA(Tyr) in a two-step reaction: tyrosine is first activated by ATP to form Tyr-AMP and then transferred to the acceptor end of tRNA(Tyr). The sequence is that of Tyrosine--tRNA ligase 1 from Pyrobaculum aerophilum (strain ATCC 51768 / DSM 7523 / JCM 9630 / CIP 104966 / NBRC 100827 / IM2).